Here is a 109-residue protein sequence, read N- to C-terminus: MQVASILQVRPPFFPQIHFLLFFFCFFVSKSRVASQRGTHFLVRICFEPPLQGCRMGKLCRPHLNHLLYLCYTAYFSNISWLSVSKSTSRNRVHKYIPYKSTELRSVAN.

This is an uncharacterized protein from Saccharomyces cerevisiae (strain ATCC 204508 / S288c) (Baker's yeast).